Reading from the N-terminus, the 729-residue chain is Kinesin-like protein KAR3 (729 aa).

Residues 1–48 are disordered; the sequence is MESLPRTPTKGRSTQHLSTPSPKNDILAMNGHKRRNTTTPPPKHTLLK. A globular region spans residues 1–109; that stretch reads MESLPRTPTK…ENVNELNRTQ (109 aa). A compositionally biased stretch (polar residues) spans 10–22; it reads KGRSTQHLSTPSP. A coiled-coil region spans residues 110–357; the sequence is AILFEKKATL…LEEYIKDTEL (248 aa). ATP contacts are provided by N386, R388, R392, E454, G477, S478, G479, K480, T481, F482, E554, K579, and T694. The Kinesin motor domain occupies 386 to 723; that stretch reads NIRVYCRIRP…LRFASKVNST (338 aa).

Belongs to the TRAFAC class myosin-kinesin ATPase superfamily. Kinesin family. NCD subfamily. As to quaternary structure, interacts with CIK1; the interaction is direct. Interacts with VIK1; the interaction is direct.

The protein resides in the cytoplasm. Its subcellular location is the cytoskeleton. The protein localises to the microtubule organizing center. It is found in the spindle pole body. It localises to the nucleus. The protein resides in the chromosome. Its subcellular location is the spindle. It carries out the reaction ATP + H2O = ADP + phosphate + H(+). The enzyme catalyses ATP + H2O + a kinesin associated with a microtubule at position (n) = ADP + phosphate + a kinesin associated with a microtubule at position (n-1, toward the minus end).. Functionally, minus end-directed microtubule (MT) motor involved in spindle midzone assembly, poleward transport of newly captured kinetochores along the lateral side of MTs, karyogamy (nuclear fusion) during mating, and with an essential function in meiosis I. Functions together with the accessory proteins CIK1 or VIK1. Drives the poleward transport of newly captured kinetochores along the lateral side of MTs, both during S-phase and during M-phase. To contribute to spindle midzone assembly during mitotic metaphase, the nuclear KAR3-CIK1 motor cross-links anti-parallel microtubules to align them on the spindle axis; as the motor travels polewards splayed microtubules are pulled into alignment. During the karyogamy (nuclear fusion) step of mating, KAR3-CIK1 cross-links antiparallel cytoplasmic microtubules emanating from the spindle pole bodies of mating partners; the motor activity of KAR3 creates the force that pulls the nuclei together by sliding cross-linked microtubules past one another. KAR3-CIK1 promotes microtubule shortening predominantly from the microtubule plus-end. Together with cytoplasmic VIK1, may act to stabilize microtubules. Requires accessory protein VIK1 for spindle pole body localization and to allow the CIN8 and KIP1 motors to generate outwardly directed spindle forces. Essential during meiosis I. The ATPase activity is stimulated by microtubule-binding. The polypeptide is Kinesin-like protein KAR3 (KAR3) (Saccharomyces cerevisiae (strain ATCC 204508 / S288c) (Baker's yeast)).